The chain runs to 417 residues: Fatty-acid peroxygenase (417 aa).

Cys363 lines the heme pocket.

It belongs to the cytochrome P450 family. Heme is required as a cofactor.

It carries out the reaction a 1,2-saturated fatty acid + H2O2 = a 2-hydroxy fatty acid + H2O. The catalysed reaction is a 2,3-saturated fatty acid + H2O2 = a 3-hydroxy fatty acid + H2O. It catalyses the reaction tetradecanoate + H2O2 = (3R)-hydroxytetradecanoate + H2O. The enzyme catalyses tetradecanoate + H2O2 = (2R)-hydroxytetradecanoate + H2O. It carries out the reaction tetradecanoate + H2O2 = (2S)-hydroxytetradecanoate + H2O. In terms of biological role, catalyzes the alpha- and beta-hydroxylation of myristic acid in the presence of hydrogen peroxide. This chain is Fatty-acid peroxygenase (cypC), found in Bacillus subtilis (strain 168).